Here is a 323-residue protein sequence, read N- to C-terminus: Acetylglutamate kinase (323 aa).

Residues Gly90 to Gly91, Arg112, and Asn218 each bind substrate.

It belongs to the acetylglutamate kinase family. ArgB subfamily.

It is found in the cytoplasm. It catalyses the reaction N-acetyl-L-glutamate + ATP = N-acetyl-L-glutamyl 5-phosphate + ADP. It participates in amino-acid biosynthesis; L-arginine biosynthesis; N(2)-acetyl-L-ornithine from L-glutamate: step 2/4. Catalyzes the ATP-dependent phosphorylation of N-acetyl-L-glutamate. In Ehrlichia canis (strain Jake), this protein is Acetylglutamate kinase.